Reading from the N-terminus, the 403-residue chain is Alkaline protease 1 (403 aa).

Residues 1-21 (MLSIKRTLLLLGAVLPAVFGA) form the signal peptide. Positions 22–125 (PVQETRRAAQ…QIWYIDALTT (104 aa)) are excised as a propeptide. Positions 36–120 (KYIVTFKPGT…HVEEDQIWYI (85 aa)) constitute an Inhibitor I9 domain. In terms of domain architecture, Peptidase S8 spans 130–403 (PWGLGSISHK…PNKLAYNGNA (274 aa)). Catalysis depends on charge relay system residues Asp162 and His193. Asn253 and Asn307 each carry an N-linked (GlcNAc...) asparagine glycan. Ser349 (charge relay system) is an active-site residue.

The protein belongs to the peptidase S8 family.

It localises to the secreted. It catalyses the reaction Hydrolysis of proteins with broad specificity, and of Bz-Arg-OEt &gt; Ac-Tyr-OEt. Does not hydrolyze peptide amides.. Secreted alkaline protease that allows assimilation of proteinaceous substrates. This chain is Alkaline protease 1 (alp1), found in Neosartorya fischeri (strain ATCC 1020 / DSM 3700 / CBS 544.65 / FGSC A1164 / JCM 1740 / NRRL 181 / WB 181) (Aspergillus fischerianus).